The chain runs to 605 residues: Granule-bound starch synthase 1, chloroplastic/amyloplastic (605 aa).

A chloroplast-targeting transit peptide spans 1–72 (MAALATSQLV…GGRFPSLVVC (72 aa)). Residue Lys-91 participates in ADP-alpha-D-glucose binding.

This sequence belongs to the glycosyltransferase 1 family. Bacterial/plant glycogen synthase subfamily.

The protein resides in the plastid. The protein localises to the chloroplast. It localises to the amyloplast. It carries out the reaction an NDP-alpha-D-glucose + [(1-&gt;4)-alpha-D-glucosyl](n) = [(1-&gt;4)-alpha-D-glucosyl](n+1) + a ribonucleoside 5'-diphosphate + H(+). It participates in glycan biosynthesis; starch biosynthesis. In terms of biological role, required for the synthesis of amylose in endosperm. The sequence is that of Granule-bound starch synthase 1, chloroplastic/amyloplastic (WAXY) from Zea mays (Maize).